Here is a 509-residue protein sequence, read N- to C-terminus: Circadian clock oscillator protein KaiC (509 aa).

KaiC domains are found at residues 1–243 (MKDK…IIVF) and 257–509 (IRIS…IEKN). Positions 45, 46, 47, 48, 49, 85, 220, 221, 222, 224, 226, 237, 286, 287, 288, 289, 290, and 291 each coordinate ATP. Threonine 49 contacts Mg(2+). Residues threonine 291 and glutamate 314 each contribute to the Mg(2+) site. Residue tryptophan 327 participates in ATP binding. Serine 427 is modified (phosphoserine; by autocatalysis). Threonine 428 carries the phosphothreonine; by autocatalysis modification. Residues arginine 447, lysine 453, methionine 454, arginine 455, serine 457, histidine 459, and lysine 461 each contribute to the ATP site.

Belongs to the KaiC family. In terms of assembly, homohexamer; hexamerization is dependent on ATP-binding. Component of the KaiBC complex. KaiC interacts with SasA, activating its autokinase function and leading to RpaA activation. It depends on Mg(2+) as a cofactor. Phosphorylated on serine and threonine residues by autocatalysis. Has a 4 step phosphorylation cycle; the autokinase acts first on Thr-428, then Ser-427. When Ser-427 is modified KaiC switches to an autophosphatase mode, acting first on phospho-Thr-428 then phospho-Ser-427.

The enzyme catalyses L-seryl-[protein] + ATP = O-phospho-L-seryl-[protein] + ADP + H(+). The catalysed reaction is L-threonyl-[protein] + ATP = O-phospho-L-threonyl-[protein] + ADP + H(+). It carries out the reaction ATP + H2O = ADP + phosphate + H(+). Its function is as follows. Central component of the KaiBC oscillator complex, which constitutes the main circadian regulator in cyanobacteria. Its composition changes during the circadian cycle to control KaiC phosphorylation. Autophosphorylates and has a weak ATPase activity; ATPase activity defines the circadian period. The sequence is that of Circadian clock oscillator protein KaiC from Prochlorococcus marinus subsp. pastoris (strain CCMP1986 / NIES-2087 / MED4).